The following is a 311-amino-acid chain: MIKLLFMGTPQFSATVLKGLLDNPAYEILGVVTQPDRAVGRKKDIKVTPVKQLALEHGISIYQPEKLSGSQELIEIMGLGADGIITAAFGQFLPTILLDSVSFAINVHASLLPKYRGGAPIHYAIMNGDKEAGVTIMEMIKEMDAGDMVAKASTPILETDNVGTLFEKLAIIGRDLLLDSLPAYLSGELKPIPQDHSQATFSPNISPEHEKLDWTMSNQEVFNHIRGMNPWPVAHTFLEGQRLKIYEAQLAEGEGLPGQVVVKTKKSLVIATGQGALSLIVVQPAGKPKMSIIDFLNGIGRKLEVGDIIGR.

110–113 contributes to the (6S)-5,6,7,8-tetrahydrofolate binding site; sequence SLLP.

Belongs to the Fmt family.

The catalysed reaction is L-methionyl-tRNA(fMet) + (6R)-10-formyltetrahydrofolate = N-formyl-L-methionyl-tRNA(fMet) + (6S)-5,6,7,8-tetrahydrofolate + H(+). Its function is as follows. Attaches a formyl group to the free amino group of methionyl-tRNA(fMet). The formyl group appears to play a dual role in the initiator identity of N-formylmethionyl-tRNA by promoting its recognition by IF2 and preventing the misappropriation of this tRNA by the elongation apparatus. The polypeptide is Methionyl-tRNA formyltransferase (Streptococcus pyogenes serotype M1).